We begin with the raw amino-acid sequence, 120 residues long: Non-specific lipid-transfer protein 1 (120 aa).

Positions 1 to 25 are cleaved as a signal peptide; it reads MARSMKLACVALVICMVVIAPMAEA. Cystine bridges form between cysteine 29/cysteine 78, cysteine 39/cysteine 55, cysteine 56/cysteine 101, and cysteine 76/cysteine 115. Phenylalanine 120 is a propeptide.

Belongs to the plant LTP family. Expressed in roots, stem, leaves and tendrils of the mature plant.

Its function is as follows. Plant non-specific lipid-transfer proteins transfer phospholipids as well as galactolipids across membranes. May play a role in wax or cutin deposition in the cell walls of expanding epidermal cells and certain secretory tissues. Binds saturated and unsaturated lipids, jasmonic acid and lysolipids. Has antifungal activity against A.niger VKM F-2259 (IC(50)=40 uM), F.oxysporum TCXA-4 (IC(50)=20-40), F.solani VKM F-142 (IC(50)=20-40 uM) and N.crassa VKM F-184 (IC(50)=40 uM). Has weak antibacterial activity against A.tumefaciens A281, C.michiganensis VKM Ac-1144 and P.syringae VKM B-1546. This chain is Non-specific lipid-transfer protein 1, found in Pisum sativum (Garden pea).